Here is a 423-residue protein sequence, read N- to C-terminus: Protein FAM43A (423 aa).

Over residues 263-283 (EQELQEEEEEEQPEGCPEEEE) the composition is skewed to acidic residues. Disordered regions lie at residues 263–298 (EQEL…EAEA), 321–344 (RGEA…LLLG), and 382–423 (LSGD…PHSG). The segment covering 323–335 (EALGGGGGSLGPG) has biased composition (gly residues). Residues 383–393 (SGDSTGSESSI) are compositionally biased toward low complexity. A compositionally biased stretch (polar residues) spans 401–411 (TSATAGDSSRQ).

Belongs to the FAM43 family.

The sequence is that of Protein FAM43A (FAM43A) from Homo sapiens (Human).